We begin with the raw amino-acid sequence, 157 residues long: DNA-binding protein MNB1B (157 aa).

Disordered regions lie at residues 1-45, 59-87, and 109-157; these read MKGA…KRAP, FKEKNPKNKSVAAVGKAAGDRWKSLSESD, and YNKG…DDDE. Composition is skewed to basic and acidic residues over residues 10–27 and 76–87; these read AKADAKLAVKSKGAEKPA and AGDRWKSLSESD. The HMG box DNA-binding region spans 41–110; the sequence is PKRAPSAFFV…EYNKAIAAYN (70 aa). Composition is skewed to acidic residues over residues 124–133 and 141–157; these read EEEEEDEEES and NDEDDEEGSEEDEDDDE. Residue Ser149 is modified to Phosphoserine; by CK2.

In terms of tissue distribution, expressed in all tissues examined.

The protein localises to the nucleus. In terms of biological role, recognizes an AAGG motif at the MNF1-binding site. This Zea mays (Maize) protein is DNA-binding protein MNB1B (MNB1B).